Consider the following 86-residue polypeptide: Large ribosomal subunit protein bL31B (86 aa).

This sequence belongs to the bacterial ribosomal protein bL31 family. Type B subfamily. Part of the 50S ribosomal subunit.

The sequence is that of Large ribosomal subunit protein bL31B from Yersinia pseudotuberculosis serotype O:1b (strain IP 31758).